Consider the following 137-residue polypeptide: Nucleoside diphosphate kinase (137 aa).

6 residues coordinate ATP: K10, F58, R86, T92, R103, and N113. Residue H116 is the Pros-phosphohistidine intermediate of the active site.

This sequence belongs to the NDK family. In terms of assembly, homotetramer. Mg(2+) serves as cofactor.

Its subcellular location is the cytoplasm. The enzyme catalyses a 2'-deoxyribonucleoside 5'-diphosphate + ATP = a 2'-deoxyribonucleoside 5'-triphosphate + ADP. The catalysed reaction is a ribonucleoside 5'-diphosphate + ATP = a ribonucleoside 5'-triphosphate + ADP. In terms of biological role, major role in the synthesis of nucleoside triphosphates other than ATP. The ATP gamma phosphate is transferred to the NDP beta phosphate via a ping-pong mechanism, using a phosphorylated active-site intermediate. This chain is Nucleoside diphosphate kinase, found in Helicobacter pylori (strain G27).